A 206-amino-acid polypeptide reads, in one-letter code: Ribonuclease HII (206 aa).

An RNase H type-2 domain is found at 22-206; it reads RFICGVDEAG…ISFLKNILSL (185 aa). Residues D28, E29, and D120 each coordinate a divalent metal cation.

It belongs to the RNase HII family. Requires Mn(2+) as cofactor. Mg(2+) is required as a cofactor.

The protein localises to the cytoplasm. The enzyme catalyses Endonucleolytic cleavage to 5'-phosphomonoester.. Endonuclease that specifically degrades the RNA of RNA-DNA hybrids. In Caldicellulosiruptor bescii (strain ATCC BAA-1888 / DSM 6725 / KCTC 15123 / Z-1320) (Anaerocellum thermophilum), this protein is Ribonuclease HII.